Reading from the N-terminus, the 241-residue chain is Ribonuclease PH (241 aa).

Residues arginine 89 and glycine 127–arginine 129 contribute to the phosphate site.

The protein belongs to the RNase PH family. Homohexameric ring arranged as a trimer of dimers.

The catalysed reaction is tRNA(n+1) + phosphate = tRNA(n) + a ribonucleoside 5'-diphosphate. Its function is as follows. Phosphorolytic 3'-5' exoribonuclease that plays an important role in tRNA 3'-end maturation. Removes nucleotide residues following the 3'-CCA terminus of tRNAs; can also add nucleotides to the ends of RNA molecules by using nucleoside diphosphates as substrates, but this may not be physiologically important. Probably plays a role in initiation of 16S rRNA degradation (leading to ribosome degradation) during starvation. This is Ribonuclease PH from Xanthomonas campestris pv. campestris (strain 8004).